A 384-amino-acid chain; its full sequence is MVLSSSLFVQKRSTTTALKQPKELGHYSRTQDNGFLVNDDSRLAYYYLPDTDLDKKLDLLSGIKKFKECNTEEFDSTTLHGLLSTLEEYERRKSKKTKVDIITFRGIIRKLISSAFDSSQFNPVNFRIVSFDGQLFIKEVKTDASETSINKNRESLQARAYYSGYKFEALATLSLPLPLVPRTTLEKRPKKIINNGDQFISMVRTGIGKCKILIGAEVDCIFDFKEDSDDNLKHYAELKCTTMVNTVSDAHKFERKLFKTWLQCFLVGINRIIYGFRDDNFMLKTVEEFTTSEVPLILKNNNPQMQTVCVDAIKWYGAFTEWLLTSIPRPEDDIDTIKAYKLIFENNHLKLTEIESDDEEYKQLVEGEEILSNSFKQWRKDLRK.

Residue Glu-168 coordinates a divalent metal cation. Glu-217 is a binding site for substrate. A divalent metal cation contacts are provided by Asp-219, Glu-237, and Leu-238. The substrate site is built by Lys-239 and Gln-263.

This sequence belongs to the DXO/Dom3Z family. As to quaternary structure, interacts with RAT1; the interaction is direct, stabilizes RAT1 protein structure and stimulates its exoribonuclease activity. The interaction also stimulates RAI1 pyrophosphohydrolase activity, probably by recruiting it to mRNA substrates. A divalent metal cation is required as a cofactor.

It localises to the nucleus. The enzyme catalyses a 5'-end NAD(+)-phospho-ribonucleoside in mRNA + H2O = a 5'-end phospho-ribonucleoside in mRNA + NAD(+) + H(+). The catalysed reaction is a 5'-end (N(7)-methyl 5'-triphosphoguanosine)-ribonucleoside-ribonucleotide in mRNA + H2O = a (N(7)-methyl 5'-triphosphoguanosine)-nucleoside + a 5'-end phospho-ribonucleoside in mRNA + H(+). It carries out the reaction a 5'-end triphospho-ribonucleoside in mRNA + H2O = a 5'-end phospho-ribonucleoside in mRNA + diphosphate + H(+). Its function is as follows. Decapping enzyme for NAD-capped RNAs: specifically hydrolyzes the nicotinamide adenine dinucleotide (NAD) cap from a subset of RNAs by removing the entire NAD moiety from the 5'-end of an NAD-capped RNA. The NAD-cap is present at the 5'-end of some RNAs and snoRNAs. In contrast to the canonical 5'-end N7 methylguanosine (m7G) cap, the NAD cap promotes mRNA decay. Also acts as a non-canonical decapping enzyme that removes the entire cap structure of m7G capped or incompletely capped RNAs. Has decapping activity toward incomplete 5'-end m7G cap mRNAs such as unmethylated 5'-end-capped RNA (cap0), while it has no activity toward 2'-O-ribose methylated m7G cap (cap1). Also possesses RNA 5'-pyrophosphohydrolase activity by hydrolyzing the 5'-end triphosphate to release pyrophosphates. Stimulates exoribonuclease activity of Rat1, allowing it to degrade RNAs with stable secondary structure more effectively. This is Decapping nuclease RAI1 (RAI1) from Kluyveromyces lactis (strain ATCC 8585 / CBS 2359 / DSM 70799 / NBRC 1267 / NRRL Y-1140 / WM37) (Yeast).